The chain runs to 640 residues: Antigenic protein NP1 (640 aa).

Positions 1–288 (VQVSIGKCNH…SYVNIAHAFG (288 aa)) constitute a Peptidase M60 domain. Positions 463 to 615 (LDPHQVEYEV…TDQSSVNVSK (153 aa)) constitute a PA14 domain.

The sequence is that of Antigenic protein NP1 from Entamoeba histolytica.